The primary structure comprises 132 residues: Small ribosomal subunit protein uS8 (132 aa).

Belongs to the universal ribosomal protein uS8 family. Part of the 30S ribosomal subunit. Contacts proteins S5 and S12.

In terms of biological role, one of the primary rRNA binding proteins, it binds directly to 16S rRNA central domain where it helps coordinate assembly of the platform of the 30S subunit. The polypeptide is Small ribosomal subunit protein uS8 (Rickettsia bellii (strain OSU 85-389)).